Here is a 122-residue protein sequence, read N- to C-terminus: Large ribosomal subunit protein uL14c (122 aa).

It belongs to the universal ribosomal protein uL14 family. As to quaternary structure, part of the 50S ribosomal subunit.

Its subcellular location is the plastid. The protein localises to the chloroplast. Binds to 23S rRNA. In Staurastrum punctulatum (Green alga), this protein is Large ribosomal subunit protein uL14c.